Here is a 444-residue protein sequence, read N- to C-terminus: UDP-N-acetylmuramoylalanine--D-glutamate ligase (444 aa).

109–115 (GSNGKTT) is a binding site for ATP.

Belongs to the MurCDEF family.

The protein resides in the cytoplasm. It carries out the reaction UDP-N-acetyl-alpha-D-muramoyl-L-alanine + D-glutamate + ATP = UDP-N-acetyl-alpha-D-muramoyl-L-alanyl-D-glutamate + ADP + phosphate + H(+). Its pathway is cell wall biogenesis; peptidoglycan biosynthesis. Functionally, cell wall formation. Catalyzes the addition of glutamate to the nucleotide precursor UDP-N-acetylmuramoyl-L-alanine (UMA). This Bacteroides thetaiotaomicron (strain ATCC 29148 / DSM 2079 / JCM 5827 / CCUG 10774 / NCTC 10582 / VPI-5482 / E50) protein is UDP-N-acetylmuramoylalanine--D-glutamate ligase.